The primary structure comprises 203 residues: Protein GrpE (203 aa).

Residues Met-1–Met-20 show a composition bias toward basic and acidic residues. The disordered stretch occupies residues Met-1–Ala-38.

It belongs to the GrpE family. As to quaternary structure, homodimer.

It is found in the cytoplasm. Its function is as follows. Participates actively in the response to hyperosmotic and heat shock by preventing the aggregation of stress-denatured proteins, in association with DnaK and GrpE. It is the nucleotide exchange factor for DnaK and may function as a thermosensor. Unfolded proteins bind initially to DnaJ; upon interaction with the DnaJ-bound protein, DnaK hydrolyzes its bound ATP, resulting in the formation of a stable complex. GrpE releases ADP from DnaK; ATP binding to DnaK triggers the release of the substrate protein, thus completing the reaction cycle. Several rounds of ATP-dependent interactions between DnaJ, DnaK and GrpE are required for fully efficient folding. This is Protein GrpE from Proteus mirabilis (strain HI4320).